A 37-amino-acid polypeptide reads, in one-letter code: Large ribosomal subunit protein bL36c (37 aa).

It belongs to the bacterial ribosomal protein bL36 family.

Its subcellular location is the plastid. It is found in the organellar chromatophore. This chain is Large ribosomal subunit protein bL36c, found in Paulinella chromatophora.